The sequence spans 637 residues: Neurexin-3-beta (637 aa).

The signal sequence occupies residues 1–35 (MHLRIHARRSPPRRPAWTLGIWFLFWGCIVSSVWS). Topologically, residues 36–562 (SSNVASSSST…EVIRESSSTT (527 aa)) are extracellular. The segment covering 43-52 (SSTSSSPGSH) has biased composition (low complexity). The disordered stretch occupies residues 43 to 65 (SSTSSSPGSHSQHEHHFHGSKHH). Residues 55-65 (HEHHFHGSKHH) are compositionally biased toward basic residues. A Laminin G-like domain is found at 85–255 (ATYIFGKSGG…NPNIKINGSV (171 aa)). 2 residues coordinate Ca(2+): aspartate 137 and isoleucine 154. Asparagine 184 is a glycosylation site (N-linked (GlcNAc...) asparagine). Isoleucine 206 and asparagine 208 together coordinate Ca(2+). 2 N-linked (GlcNAc...) asparagine glycosylation sites follow: asparagine 252 and asparagine 296. The disordered stretch occupies residues 289–310 (ATTTTRKNRSTASIQPTSDDLV). Residues 298 to 310 (STASIQPTSDDLV) show a composition bias toward polar residues. Residue serine 312 is glycosylated (O-linked (Xyl...) (heparan sulfate) serine). A helical membrane pass occupies residues 563–583 (GMVVGIVAAAALCILILLYAM). Topologically, residues 584–637 (YKYRNRDEGSYQVDETRNYISNSAQSNGTLMKEKQQSSKSGHKKQKNKDREYYV) are cytoplasmic. The tract at residues 605 to 637 (NSAQSNGTLMKEKQQSSKSGHKKQKNKDREYYV) is disordered.

This sequence belongs to the neurexin family. Weakly interacts with CBLN1 and CBLN2. Very weak binding, if any, to CBLN4. Specific isoforms bind neuroligins NLGN1, NLGN2 and NLGN3. Interacts with CLSTN3. Post-translationally, processed by alpha-secretase leading to the formation of an extracellular soluble protein as well as a C-terminal membrane-embedded fragment (CTF). Proteolysis of these CTFs by gamma-secretase releases intracellular domains (ICDs) and extracellular peptides. In terms of processing, O-glycosylated; contains heparan sulfate. Heparan sulfate attachment is required for synapse development by mediating interactions with neuroligins. Expressed in the blood vessel walls (at protein level).

The protein resides in the presynaptic cell membrane. Neuronal cell surface protein that may be involved in cell recognition and cell adhesion. May mediate intracellular signaling. Functions as part of a trans-synaptic complex by binding to cerebellins and postsynaptic GRID1. This interaction helps regulate the activity of NMDA and AMPA receptors at hippocampal synapses without affecting synapse formation. NRXN3B-CBLN2-GRID1 complex transduce presynaptic signals into postsynaptic AMPAR response. In Homo sapiens (Human), this protein is Neurexin-3-beta.